Here is a 477-residue protein sequence, read N- to C-terminus: Kinesin-like protein KIN-1 (477 aa).

Residues 3–330 (NVTVCVRFRP…VRFGTRTKLI (328 aa)) enclose the Kinesin motor domain. An ATP-binding site is contributed by 86-93 (GQTGAGKT). Positions 402–451 (QDAASQEVSLLTQAVEELKETVEELTDENERLRGELELAQEAAAAAAAAR) form a coiled coil.

This sequence belongs to the TRAFAC class myosin-kinesin ATPase superfamily. Kinesin family. KIN-1 subfamily. In terms of tissue distribution, widely expressed. Expressed in young roots and leaves, in mature roots, culm, sheath and leaves, and in panicles at various developmental stages. Strongest expression is detected in panicles. In the panicle, expression is detected in anthers, glumme, lemma and palea. In the spikelet, expression is detected in both microsporocyte and the anther walls.

It localises to the cytoplasm. Functionally, kinesin-like motor protein that exhibits microtubule-stimulated ATPase activity. Plays an essential role in male meiotic chromosomal dynamics, male gametogenesis and anther dehiscence. May play a minor and nonessential role in regulating meiotic spindle formation. This Oryza sativa subsp. japonica (Rice) protein is Kinesin-like protein KIN-1.